A 422-amino-acid polypeptide reads, in one-letter code: NADH-quinone oxidoreductase subunit D 1 (422 aa).

Belongs to the complex I 49 kDa subunit family. As to quaternary structure, NDH-1 is composed of 14 different subunits. Subunits NuoB, C, D, E, F, and G constitute the peripheral sector of the complex.

The protein localises to the cell membrane. It catalyses the reaction a quinone + NADH + 5 H(+)(in) = a quinol + NAD(+) + 4 H(+)(out). Functionally, NDH-1 shuttles electrons from NADH, via FMN and iron-sulfur (Fe-S) centers, to quinones in the respiratory chain. The immediate electron acceptor for the enzyme in this species is believed to be ubiquinone. Couples the redox reaction to proton translocation (for every two electrons transferred, four hydrogen ions are translocated across the cytoplasmic membrane), and thus conserves the redox energy in a proton gradient. This chain is NADH-quinone oxidoreductase subunit D 1, found in Herpetosiphon aurantiacus (strain ATCC 23779 / DSM 785 / 114-95).